Reading from the N-terminus, the 307-residue chain is MYEHIPVLLEESTSYLVTKPDGIYVDATFGLGGHSKKILEKLSSNGFLVAIDKDEEAIELGKEKFKKCNNIKIVHSPFSRLDEVLNFLKIDKIDGILFDLGVSSLQLDKPERGFSYNSDSFLDMRMDKTSKLTAYDVVNKYSEKELERIIREYGEERYAKKIAKEIVKRREQKPITTTKELNDLINSVVPRPKDGSNPAKRTFQAIRIEVNGELEEIKVALEKSIRFLKSGGRICVISFHSLEDRIVKEFFKYHSLECICPKDIPVCVCGKKKELNILTKKPITPTKEEIERNKRSHSAKLRVAEKI.

S-adenosyl-L-methionine-binding positions include 32-34 (GGH), D52, F78, D99, and Q106.

It belongs to the methyltransferase superfamily. RsmH family.

Its subcellular location is the cytoplasm. It carries out the reaction cytidine(1402) in 16S rRNA + S-adenosyl-L-methionine = N(4)-methylcytidine(1402) in 16S rRNA + S-adenosyl-L-homocysteine + H(+). Specifically methylates the N4 position of cytidine in position 1402 (C1402) of 16S rRNA. The polypeptide is Ribosomal RNA small subunit methyltransferase H (Caldicellulosiruptor saccharolyticus (strain ATCC 43494 / DSM 8903 / Tp8T 6331)).